The sequence spans 439 residues: 5-hydroxybenzimidazole synthase (439 aa).

Substrate-binding positions include Met-96, Tyr-125, His-164, 187–189, 228–231, and Glu-267; these read SKG and NGIR. His-271 provides a ligand contact to Zn(2+). Tyr-294 lines the substrate pocket. Residue His-335 coordinates Zn(2+). Residues Cys-410, Cys-413, and Cys-417 each contribute to the [4Fe-4S] cluster site.

This sequence belongs to the ThiC family. 5-hydroxybenzimidazole synthase subfamily. Homodimer. Requires [4Fe-4S] cluster as cofactor.

The catalysed reaction is 5-amino-1-(5-phospho-beta-D-ribosyl)imidazole + AH2 + S-adenosyl-L-methionine = 5-hydroxybenzimidazole + 5'-deoxyadenosine + formate + L-methionine + A + NH4(+) + phosphate + 2 H(+). Functionally, catalyzes the conversion of aminoimidazole ribotide (AIR) to 5-hydroxybenzimidazole (5-HBI) in a radical S-adenosyl-L-methionine (SAM)-dependent reaction. Is thus involved in the anaerobic biosynthesis of the benzimidazole lower axial ligand of the cobamide produced by D.autotrophicum. In Desulforapulum autotrophicum (strain ATCC 43914 / DSM 3382 / VKM B-1955 / HRM2) (Desulfobacterium autotrophicum), this protein is 5-hydroxybenzimidazole synthase.